A 493-amino-acid chain; its full sequence is Ribosomal protein uS12 methylthiotransferase RimO (493 aa).

In terms of domain architecture, MTTase N-terminal spans Arg5–Asn121. Positions 14, 50, and 84 each coordinate [4Fe-4S] cluster. The tract at residues Leu153–Arg177 is disordered. Residues Leu179–Arg410 enclose the Radical SAM core domain. [4Fe-4S] cluster-binding residues include Cys193, Cys197, and Cys200. The 71-residue stretch at Asp412–Leu482 folds into the TRAM domain.

Belongs to the methylthiotransferase family. RimO subfamily. It depends on [4Fe-4S] cluster as a cofactor.

Its subcellular location is the cytoplasm. It carries out the reaction L-aspartate(89)-[ribosomal protein uS12]-hydrogen + (sulfur carrier)-SH + AH2 + 2 S-adenosyl-L-methionine = 3-methylsulfanyl-L-aspartate(89)-[ribosomal protein uS12]-hydrogen + (sulfur carrier)-H + 5'-deoxyadenosine + L-methionine + A + S-adenosyl-L-homocysteine + 2 H(+). Functionally, catalyzes the methylthiolation of an aspartic acid residue of ribosomal protein uS12. This Streptomyces coelicolor (strain ATCC BAA-471 / A3(2) / M145) protein is Ribosomal protein uS12 methylthiotransferase RimO.